Reading from the N-terminus, the 353-residue chain is MRIEKDKELMNILKIMAPGTPLREGLENILRAKTGGLLILGDSDQILKLVDGGFKINSEYSPSYVYELAKMDGSIVLSSDLKKILCANAQLIPDSSIPTFETGTRHRTADRVAKQTGSIVIAISQRRNIITVYKGGIKYVLRDSSIILARANQALQTLEKYVAVLDRVVNNLNILEFKDIATLFDVVTAIQRSEMVMRIVSEIERYICELGNEGRLIDMQLSELIKSVEEDGILLIRDYCRSNMEYEDIYKQIQGLSSEELLNLDGLSKIIGYTGVPLVDTLISPRGYRMINKIPRIPSNVIENLVANFNQLKCVMEASYEQLDNVEGIGEARAKAIKNGLRRLREQIMLDKV.

The region spanning 6 to 144 (DKELMNILKI…GGIKYVLRDS (139 aa)) is the DAC domain. Residues glycine 73, leucine 91, and 104–108 (TRHRT) contribute to the ATP site.

This sequence belongs to the DisA family. Homooctamer. The cofactor is Mg(2+).

It catalyses the reaction 2 ATP = 3',3'-c-di-AMP + 2 diphosphate. Its function is as follows. Participates in a DNA-damage check-point that is active prior to asymmetric division when DNA is damaged. DisA forms globular foci that rapidly scan along the chromosomes during sporulation, searching for lesions. When a lesion is present, DisA pauses at the lesion site. This triggers a cellular response that culminates in a temporary block in sporulation initiation. In terms of biological role, also has diadenylate cyclase activity, catalyzing the condensation of 2 ATP molecules into cyclic di-AMP (c-di-AMP). c-di-AMP acts as a signaling molecule that couples DNA integrity with progression of sporulation. The rise in c-di-AMP level generated by DisA while scanning the chromosome, operates as a positive signal that advances sporulation; upon encountering a lesion, the DisA focus arrests at the damaged site and halts c-di-AMP synthesis. The protein is DNA integrity scanning protein DisA of Clostridium botulinum (strain Loch Maree / Type A3).